Consider the following 196-residue polypeptide: Homeobox protein XENK-2 (196 aa).

Residues 48 to 72 form a disordered region; the sequence is PSADESPDNDKELSSNPDSGKKRKR. The homeobox DNA-binding region spans 69 to 128; that stretch reads KRKRRVLFSKAQTYELERRFRQQRYLSAPEREHLASLIRLTPTQVKIWFQNHRYKMKRAR.

The protein belongs to the NK-2 homeobox family. Forebrain and midbrain.

The protein resides in the nucleus. Defines dorsal-ventral domains in developing brain. May play a role in defining positional information along the anterior-posterior (a/p) axis and the dorsal-ventral (d/v) axis of the developing nervous system. May be involved in determining positional or boundary information rather than determining a given cell type. The sequence is that of Homeobox protein XENK-2 from Xenopus laevis (African clawed frog).